Reading from the N-terminus, the 304-residue chain is Thyroxine 5-deiodinase (304 aa).

Positions 1–22 (MPRQAASRLVVGEGEGPPGASG) are disordered. Over 1-42 (MPRQAASRLVVGEGEGPPGASGPAATMLRSLLLHSLRLCAQT) the chain is Cytoplasmic. The helical; Signal-anchor for type II membrane protein transmembrane segment at 43–62 (ASCLVLFPRFLGTAFMLWLL) threads the bilayer. Topologically, residues 63–304 (DFLCIRKHFL…QLHGTRPRRL (242 aa)) are extracellular. Sec170 is a catalytic residue. Position 170 (Sec170) is a non-standard amino acid, selenocysteine.

This sequence belongs to the iodothyronine deiodinase family. Monomer. Homodimer. May undergo minor heretodimerization with DIO1 and DIO2. Neonatal skin, placenta, skeletal muscle and cerebral cortex.

The protein resides in the cell membrane. It localises to the endosome membrane. It carries out the reaction 3,3',5'-triiodo-L-thyronine + iodide + A + H(+) = L-thyroxine + AH2. It catalyses the reaction 3,3'-diiodo-L-thyronine + iodide + A + H(+) = 3,3',5-triiodo-L-thyronine + AH2. The catalysed reaction is 3-iodo-L-thyronine + iodide + A + H(+) = 3,5-diiodo-L-thyronine + AH2. The enzyme catalyses L-thyronine + iodide + A + H(+) = 3-iodo-L-thyronine + AH2. It carries out the reaction 3',5'-diiodo-L-thyronine + iodide + A + H(+) = 3,3',5'-triiodo-L-thyronine + AH2. It catalyses the reaction 3'-iodo-L-thyronine + iodide + A + H(+) = 3,3'-diiodo-L-thyronine + AH2. The catalysed reaction is 3,3',5'-triiodothyronamine + iodide + A + H(+) = 3,3',5,5'-tetraiodothyronamine + AH2. The enzyme catalyses 3',5'-diiodothyronamine + iodide + A + H(+) = 3,3',5'-triiodothyronamine + AH2. It carries out the reaction 3,3'-diiodothyronamine + iodide + A + H(+) = 3,3',5-triiodothyronamine + AH2. It catalyses the reaction 3-iodothyronamine + iodide + A + H(+) = 3,5-diiodothyronamine + AH2. The catalysed reaction is 3'-iodothyronamine + iodide + A + H(+) = 3,3'-diiodothyronamine + AH2. The enzyme catalyses thyronamine + iodide + A + H(+) = 3-iodothyronamine + AH2. In terms of biological role, plays a crucial role in the metabolism of thyroid hormones (TH) and has specific roles in TH activation and inactivation by deiodination. Catalyzes the deiodination of L-thyroxine (T4) to 3,3',5'-triiodothyronine (rT3), 3,5-diiodothyronine (3,5-T2) to 3-monoiodothyronine (3-T1), rT3 to 3',5'-diiodothyronine (3',5'-T2) and 3,3'-diiodothyronine (3,3'-T2) to 3'-monoiodothyronine (3'-T1) via inner-ring deiodination (IRD). Catalyzes the deiodination of 3,5,3'-triiodothyronine (T3) to 3,3'-diiodothyronine (3,3'-T2) via IRD. Catalyzes the deiodination of 3-T1 to L-thyronine (T0) via outer-ring deiodination (ORD). Catalyzes the tyrosyl ring deiodinations of T4AM (3,3',5,5'-tetraiodothyronamine), rT3AM (3,3',5'-triiodothyronamine), T3AM (3,5,3'-triiodothyronamine), 3,5-T2AM (3,5-diiodothyronamine), 3,3'-T2AM (3,3'-diiodothyronamine) and 3-T1AM (3-iodothyronamine). The protein is Thyroxine 5-deiodinase (Dio3) of Rattus norvegicus (Rat).